We begin with the raw amino-acid sequence, 467 residues long: 3-isopropylmalate dehydratase large subunit (467 aa).

[4Fe-4S] cluster contacts are provided by cysteine 347, cysteine 407, and cysteine 410.

The protein belongs to the aconitase/IPM isomerase family. LeuC type 1 subfamily. Heterodimer of LeuC and LeuD. The cofactor is [4Fe-4S] cluster.

The enzyme catalyses (2R,3S)-3-isopropylmalate = (2S)-2-isopropylmalate. It functions in the pathway amino-acid biosynthesis; L-leucine biosynthesis; L-leucine from 3-methyl-2-oxobutanoate: step 2/4. Catalyzes the isomerization between 2-isopropylmalate and 3-isopropylmalate, via the formation of 2-isopropylmaleate. The polypeptide is 3-isopropylmalate dehydratase large subunit (Synechococcus sp. (strain JA-3-3Ab) (Cyanobacteria bacterium Yellowstone A-Prime)).